Reading from the N-terminus, the 189-residue chain is Large ribosomal subunit protein uL5 (189 aa).

This sequence belongs to the universal ribosomal protein uL5 family. In terms of assembly, part of the 50S ribosomal subunit; part of the 5S rRNA/L5/L18/L25 subcomplex. Contacts the 5S rRNA and the P site tRNA. Forms a bridge to the 30S subunit in the 70S ribosome.

In terms of biological role, this is one of the proteins that bind and probably mediate the attachment of the 5S RNA into the large ribosomal subunit, where it forms part of the central protuberance. In the 70S ribosome it contacts protein S13 of the 30S subunit (bridge B1b), connecting the 2 subunits; this bridge is implicated in subunit movement. Contacts the P site tRNA; the 5S rRNA and some of its associated proteins might help stabilize positioning of ribosome-bound tRNAs. The chain is Large ribosomal subunit protein uL5 from Kineococcus radiotolerans (strain ATCC BAA-149 / DSM 14245 / SRS30216).